The following is a 313-amino-acid chain: DNA-directed RNA polymerase subunit alpha (313 aa).

Residues 1 to 226 form an alpha N-terminal domain (alpha-NTD) region; sequence MLEIEKPKIE…EHMRLFLGLT (226 aa). The tract at residues 242-313 is alpha C-terminal domain (alpha-CTD); the sequence is TRDRLMDMSI…LGLSLRSSEE (72 aa).

The protein belongs to the RNA polymerase alpha chain family. Homodimer. The RNAP catalytic core consists of 2 alpha, 1 beta, 1 beta' and 1 omega subunit. When a sigma factor is associated with the core the holoenzyme is formed, which can initiate transcription.

It carries out the reaction RNA(n) + a ribonucleoside 5'-triphosphate = RNA(n+1) + diphosphate. DNA-dependent RNA polymerase catalyzes the transcription of DNA into RNA using the four ribonucleoside triphosphates as substrates. This chain is DNA-directed RNA polymerase subunit alpha, found in Moorella thermoacetica (strain ATCC 39073 / JCM 9320).